Consider the following 449-residue polypeptide: Transport protein ComB (449 aa).

Residues 1-20 (MKPEFLESAEFYNRRYHNFS) lie on the Cytoplasmic side of the membrane. The chain crosses the membrane as a helical span at residues 21–41 (SSVIVPMALLLVFLLGFATVA). The Extracellular portion of the chain corresponds to 42–449 (EKEMSLSTRA…YYLDQFLNKE (408 aa)).

This sequence belongs to the membrane fusion protein (MFP) (TC 8.A.1) family.

Its subcellular location is the cell membrane. In terms of biological role, required for induction of competence. The chain is Transport protein ComB (comB) from Streptococcus pneumoniae (strain ATCC BAA-255 / R6).